Here is a 309-residue protein sequence, read N- to C-terminus: MDDQGCPRCKTTKYRNPSLKLMVNVCGHTLCESCVDLLFVRGAGNCPECGTPLRKSNFRVQLFEDPTVDKEVEIRKKVLKIYNKREEDFPSLREYNDFLEEVEEIVFNLTNNVDLENTKKKMEIYQKENKDVIQKNKLKLTREQEELEEALEVERQEHEQRRLFIQKEEELQQALKRKNKQAFLDELESSDLPVALLLAQHKDRSTQLEMQLEKPRSMKPVTFSTGIKMGQQISLAPIQKLEEALYEYQPLQIETCGPQVPEQELLGRLGYLNHVRAASPQDLAGGYTSSLACHRALQDAFSGLFWQPR.

Methionine 1 bears the N-acetylmethionine mark. An RING-type zinc finger spans residues 6-50; the sequence is CPRCKTTKYRNPSLKLMVNVCGHTLCESCVDLLFVRGAGNCPECG. The residue at position 51 (threonine 51) is a Phosphothreonine. One can recognise a UIM domain in the interval 142-161; it reads REQEELEEALEVERQEHEQR. A Phosphoserine modification is found at serine 279.

Associates primarily with CDK7 and cyclin H to form the CAK complex. CAK can further associate with the core-TFIIH to form the TFIIH basal transcription factor.

Its subcellular location is the nucleus. Stabilizes the cyclin H-CDK7 complex to form a functional CDK-activating kinase (CAK) enzymatic complex. CAK activates the cyclin-associated kinases CDK1, CDK2, CDK4 and CDK6 by threonine phosphorylation. CAK complexed to the core-TFIIH basal transcription factor activates RNA polymerase II by serine phosphorylation of the repetitive C-terminal domain (CTD) of its large subunit (POLR2A), allowing its escape from the promoter and elongation of the transcripts. Involved in cell cycle control and in RNA transcription by RNA polymerase II. This Mus musculus (Mouse) protein is CDK-activating kinase assembly factor MAT1 (Mnat1).